A 349-amino-acid polypeptide reads, in one-letter code: N-acetyl-gamma-glutamyl-phosphate reductase (349 aa).

Residue Cys153 is part of the active site.

Belongs to the NAGSA dehydrogenase family. Type 1 subfamily.

It is found in the cytoplasm. The catalysed reaction is N-acetyl-L-glutamate 5-semialdehyde + phosphate + NADP(+) = N-acetyl-L-glutamyl 5-phosphate + NADPH + H(+). It participates in amino-acid biosynthesis; L-arginine biosynthesis; N(2)-acetyl-L-ornithine from L-glutamate: step 3/4. Its function is as follows. Catalyzes the NADPH-dependent reduction of N-acetyl-5-glutamyl phosphate to yield N-acetyl-L-glutamate 5-semialdehyde. This chain is N-acetyl-gamma-glutamyl-phosphate reductase, found in Magnetococcus marinus (strain ATCC BAA-1437 / JCM 17883 / MC-1).